Here is a 196-residue protein sequence, read N- to C-terminus: MNVVILDTGCANLNSVKSAIARHGYEPKVSRDPDIVLLADKLFLPGVGTAQAAMDQVRERELFDLIKACTQPVLGICLGMQLLGRRSEESNGVDLLGIIDEDVPKMTDFGLPLPHMGWNRVYPQAGNRLFQGIEDGAYFYFVHSYAMPVNPWTIAQCNYGEPFTAAVQKDNFYGVQFHPERSGAAGAKLLKNFLEM.

Residues 2-196 form the Glutamine amidotransferase type-1 domain; that stretch reads NVVILDTGCA…AKLLKNFLEM (195 aa). Residue cysteine 77 is the Nucleophile of the active site. Active-site residues include histidine 178 and glutamate 180.

As to quaternary structure, heterodimer of HisH and HisF.

The protein resides in the cytoplasm. The enzyme catalyses 5-[(5-phospho-1-deoxy-D-ribulos-1-ylimino)methylamino]-1-(5-phospho-beta-D-ribosyl)imidazole-4-carboxamide + L-glutamine = D-erythro-1-(imidazol-4-yl)glycerol 3-phosphate + 5-amino-1-(5-phospho-beta-D-ribosyl)imidazole-4-carboxamide + L-glutamate + H(+). It catalyses the reaction L-glutamine + H2O = L-glutamate + NH4(+). It participates in amino-acid biosynthesis; L-histidine biosynthesis; L-histidine from 5-phospho-alpha-D-ribose 1-diphosphate: step 5/9. IGPS catalyzes the conversion of PRFAR and glutamine to IGP, AICAR and glutamate. The HisH subunit catalyzes the hydrolysis of glutamine to glutamate and ammonia as part of the synthesis of IGP and AICAR. The resulting ammonia molecule is channeled to the active site of HisF. The polypeptide is Imidazole glycerol phosphate synthase subunit HisH (Shigella flexneri).